Here is a 318-residue protein sequence, read N- to C-terminus: Putative S-adenosyl-L-methionine-dependent methyltransferase MMAR_1595 (318 aa).

S-adenosyl-L-methionine-binding positions include Glu132 and 161–162 (DL).

It belongs to the UPF0677 family.

Functionally, exhibits S-adenosyl-L-methionine-dependent methyltransferase activity. The protein is Putative S-adenosyl-L-methionine-dependent methyltransferase MMAR_1595 of Mycobacterium marinum (strain ATCC BAA-535 / M).